The primary structure comprises 521 residues: uncharacterized protein (521 aa).

The disordered stretch occupies residues 1 to 25 (MLQRSLGVNGRKLAMSARSAKRERK). 6 helical membrane-spanning segments follow: residues 68 to 88 (GAVWVLPTFGVAIGLGSGAVL), 114 to 134 (VLIVVSATMITTIGIVFSLTV), 160 to 180 (VVLAIFACTFAYSTGGLHTVG), 192 to 212 (VAVTGSLALAFVSIAALIYFL), 290 to 310 (ALLVTFVGDYVTAGGLLGWCW), and 399 to 419 (LLFWLPYPSFATYLHVGCAQI).

Its subcellular location is the cell membrane. This is an uncharacterized protein from Mycobacterium bovis (strain ATCC BAA-935 / AF2122/97).